The primary structure comprises 1358 residues: DNA mismatch repair protein Msh6 (1358 aa).

The tract at residues 1–87 (MSRQSTLYSF…SSAQAVPPSS (87 aa)) is disordered. Phosphoserine is present on residues S14, S38, and S40. A compositionally biased stretch (low complexity) spans 25-46 (AEASRQGAAASGASASRGGDAA). N6-acetyllysine is present on K67. Positions 76–87 (ASSSAQAVPPSS) are enriched in low complexity. S91, S137, S200, S219, and S227 each carry phosphoserine. The 63-residue stretch at 92-154 (PGDLVWAKME…KRMLKPYTGS (63 aa)) folds into the PWWP domain. Positions 197–360 (DEPSEPEEEE…VSGGGNDSSG (164 aa)) are disordered. Acidic residues-rich tracts occupy residues 198-209 (EPSEPEEEEETE) and 219-231 (SEEDNYNESEEEA). Over residues 240–249 (RSSRQVKKRR) the composition is skewed to basic residues. 4 positions are modified to phosphoserine: S252, S254, S256, and S261. Basic and acidic residues predominate over residues 263–273 (VEFKPDTKQEG). T269 carries the post-translational modification Phosphothreonine. S274, S275, S279, and S280 each carry phosphoserine. The span at 329–351 (LSETKSTLSAFSAPQNSESQTHV) shows a compositional bias: polar residues. Phosphothreonine is present on T487. K503 carries the N6-acetyllysine modification. Phosphoserine is present on residues S827 and S932. T1007 carries the phosphothreonine modification. Residue 1132–1139 (GPNMGGKS) coordinates ATP.

It belongs to the DNA mismatch repair MutS family. In terms of assembly, component of the DNA mismatch repair (MMR) complex composed at least of MSH2, MSH3, MSH6, PMS1 and MLH1. Heterodimer consisting of MSH2-MSH6 (MutS alpha). Forms a ternary complex with MutL alpha (MLH1-PMS1). Interacts with MCM9. Part of the BRCA1-associated genome surveillance complex (BASC), which contains BRCA1, MSH2, MSH6, MLH1, ATM, BLM, PMS2 and the RAD50-MRE11-NBS1 protein complex. This association could be a dynamic process changing throughout the cell cycle and within subnuclear domains. In terms of processing, phosphorylated by PRKCZ, which may prevent MutS alpha degradation by the ubiquitin-proteasome pathway.

The protein localises to the nucleus. It localises to the chromosome. Functionally, component of the post-replicative DNA mismatch repair system (MMR). Heterodimerizes with MSH2 to form MutS alpha, which binds to DNA mismatches thereby initiating DNA repair. When bound, MutS alpha bends the DNA helix and shields approximately 20 base pairs, and recognizes single base mismatches and dinucleotide insertion-deletion loops (IDL) in the DNA. After mismatch binding, forms a ternary complex with the MutL alpha heterodimer, which is thought to be responsible for directing the downstream MMR events, including strand discrimination, excision, and resynthesis. ATP binding and hydrolysis play a pivotal role in mismatch repair functions. The ATPase activity associated with MutS alpha regulates binding similar to a molecular switch: mismatched DNA provokes ADP--&gt;ATP exchange, resulting in a discernible conformational transition that converts MutS alpha into a sliding clamp capable of hydrolysis-independent diffusion along the DNA backbone. This transition is crucial for mismatch repair. MutS alpha may also play a role in DNA homologous recombination repair. Recruited on chromatin in G1 and early S phase via its PWWP domain that specifically binds trimethylated 'Lys-36' of histone H3 (H3K36me3): early recruitment to chromatin to be replicated allowing a quick identification of mismatch repair to initiate the DNA mismatch repair reaction. This Mus musculus (Mouse) protein is DNA mismatch repair protein Msh6.